Reading from the N-terminus, the 369-residue chain is Outer membrane protein P2 (369 aa).

The first 20 residues, 1–20 (MKKTLAALIVGAFAASAANA), serve as a signal peptide directing secretion.

Belongs to the Gram-negative porin family. In terms of assembly, homotrimer.

The protein resides in the cell outer membrane. Its function is as follows. Forms pores that allow passive diffusion of small molecules across the outer membrane. This chain is Outer membrane protein P2 (ompP2), found in Haemophilus influenzae.